Consider the following 101-residue polypeptide: Small ribosomal subunit protein bS18c (101 aa).

Residues 1 to 19 are compositionally biased toward basic residues; it reads MNKSKRPFTKSKRSFRRRL. The tract at residues 1-23 is disordered; the sequence is MNKSKRPFTKSKRSFRRRLPPIQ.

It belongs to the bacterial ribosomal protein bS18 family. In terms of assembly, part of the 30S ribosomal subunit.

It is found in the plastid. The protein resides in the chloroplast. This is Small ribosomal subunit protein bS18c from Draba nemorosa (Woodland whitlowgrass).